The sequence spans 125 residues: Multifunctional methyltransferase subunit TRM112-like protein (125 aa).

One can recognise a TRM112 domain in the interval 2-119 (KLLTHNLLSS…SRGIPNMLLS (118 aa)). Phosphoserine is present on residues S119 and S125.

It belongs to the TRM112 family. In terms of assembly, part of the heterodimeric BUD23-TRM112 methyltransferase complex; this heterodimerization is necessary for the metabolic stability and activity of the catalytic subunit BUD23. Part of the heterodimeric N6AMT1-TRM112 methyltransferase complex; this heterodimerization is necessary for S-adenosyl-L-methionine-binding to N6AMT1/HEMK2. Part of the heterodimeric ALKBH8-TRM112 methyltransferase complex. Part of the heterodimeric METTL5-TRM112 methyltransferase complex; this heterodimerization is necessary for the stability of the catalytic subunit METTL5. Part of the heterodimeric THUMPD3-TRM112 methyltransferase complex; this complex forms an active tRNA methyltransferase, where TRMT112 acts as an activator of the catalytic subunit THUMPD3. Part of the heterodimeric THUMPD2-TRM112 methyltransferase complex; this complex forms an active tRNA methyltransferase, where TRMT112 acts as an activator of the catalytic subunit THUMPD2. Part of the heterodimeric TRMT11-TRM112 methyltransferase complex; this complex forms an active tRNA methyltransferase, where TRMT112 acts as an activator of the catalytic subunit TRMT11.

The protein resides in the nucleus. Its subcellular location is the nucleoplasm. It is found in the cytoplasm. It localises to the perinuclear region. Its function is as follows. Acts as an activator of both rRNA/tRNA and protein methyltransferases. Together with methyltransferase BUD23, methylates the N(7) position of a guanine in 18S rRNA. The heterodimer with N6AMT1/HEMK2 catalyzes N5-methylation of ETF1 on 'Gln-185', using S-adenosyl L-methionine as methyl donor. The heterodimer with N6AMT1/HEMK2 also monomethylates 'Lys-12' of histone H4 (H4K12me1). The heterodimer with ALKBH8 catalyzes the methylation of 5-carboxymethyl uridine to 5-methylcarboxymethyl uridine at the wobble position of the anticodon loop in target tRNA species. Together with methyltransferase THUMPD3, catalyzes the formation of N(2)-methylguanosine at position 6 in a broad range of tRNA substrates and at position 7 of tRNA(Trp). Involved in the pre-rRNA processing steps leading to small-subunit rRNA production. Together with methyltransferase METTL5, specifically methylates the 6th position of adenine in position 1832 of 18S rRNA. This is Multifunctional methyltransferase subunit TRM112-like protein from Homo sapiens (Human).